The primary structure comprises 101 residues: Small ribosomal subunit protein uS14 (101 aa).

Belongs to the universal ribosomal protein uS14 family. Part of the 30S ribosomal subunit. Contacts proteins S3 and S10.

Binds 16S rRNA, required for the assembly of 30S particles and may also be responsible for determining the conformation of the 16S rRNA at the A site. In Erythrobacter litoralis (strain HTCC2594), this protein is Small ribosomal subunit protein uS14.